Reading from the N-terminus, the 420-residue chain is Serine hydroxymethyltransferase (420 aa).

Residues Leu-121 and 125-127 (GHL) each bind (6S)-5,6,7,8-tetrahydrofolate. An N6-(pyridoxal phosphate)lysine modification is found at Lys-229.

Belongs to the SHMT family. As to quaternary structure, homodimer. Requires pyridoxal 5'-phosphate as cofactor.

It is found in the cytoplasm. It catalyses the reaction (6R)-5,10-methylene-5,6,7,8-tetrahydrofolate + glycine + H2O = (6S)-5,6,7,8-tetrahydrofolate + L-serine. It functions in the pathway one-carbon metabolism; tetrahydrofolate interconversion. The protein operates within amino-acid biosynthesis; glycine biosynthesis; glycine from L-serine: step 1/1. Catalyzes the reversible interconversion of serine and glycine with tetrahydrofolate (THF) serving as the one-carbon carrier. This reaction serves as the major source of one-carbon groups required for the biosynthesis of purines, thymidylate, methionine, and other important biomolecules. Also exhibits THF-independent aldolase activity toward beta-hydroxyamino acids, producing glycine and aldehydes, via a retro-aldol mechanism. The chain is Serine hydroxymethyltransferase from Glaesserella parasuis serovar 5 (strain SH0165) (Haemophilus parasuis).